The following is a 479-amino-acid chain: UDP-N-acetylmuramoyl-L-alanyl-D-glutamate--2,6-diaminopimelate ligase (479 aa).

Position 21 (Ser21) interacts with UDP-N-acetyl-alpha-D-muramoyl-L-alanyl-D-glutamate. ATP is bound at residue 98 to 104; it reads GTNGKSS. UDP-N-acetyl-alpha-D-muramoyl-L-alanyl-D-glutamate contacts are provided by residues 144 to 145, Ser171, Gln177, and Arg179; that span reads TT. Residue Lys211 is modified to N6-carboxylysine. Meso-2,6-diaminopimelate is bound by residues Arg372, 396–399, Gly446, and Glu450; that span reads DNPR. The short motif at 396–399 is the Meso-diaminopimelate recognition motif element; it reads DNPR.

It belongs to the MurCDEF family. MurE subfamily. Requires Mg(2+) as cofactor. In terms of processing, carboxylation is probably crucial for Mg(2+) binding and, consequently, for the gamma-phosphate positioning of ATP.

The protein resides in the cytoplasm. It carries out the reaction UDP-N-acetyl-alpha-D-muramoyl-L-alanyl-D-glutamate + meso-2,6-diaminopimelate + ATP = UDP-N-acetyl-alpha-D-muramoyl-L-alanyl-gamma-D-glutamyl-meso-2,6-diaminopimelate + ADP + phosphate + H(+). It functions in the pathway cell wall biogenesis; peptidoglycan biosynthesis. Its function is as follows. Catalyzes the addition of meso-diaminopimelic acid to the nucleotide precursor UDP-N-acetylmuramoyl-L-alanyl-D-glutamate (UMAG) in the biosynthesis of bacterial cell-wall peptidoglycan. The protein is UDP-N-acetylmuramoyl-L-alanyl-D-glutamate--2,6-diaminopimelate ligase of Rickettsia montanensis.